The following is a 400-amino-acid chain: Cytohesin-3 (400 aa).

Residues 14–61 (EDLSLEEREELLDIRRRKKELIDDIERLKYEIAEVMTEIDNLTSVEES) adopt a coiled-coil conformation. The SEC7 domain occupies 77-206 (FNMDPKKGIQ…IIMLNTSLHN (130 aa)). A PH domain is found at 265–381 (PDREGWLLKL…WMKSIKASIS (117 aa)). A 1,2-diacyl-sn-glycero-3-phospho-(1D-myo-inositol-3,4,5-trisphosphate) contacts are provided by residues 273–281 (KLGGGRVKT), R285, Y296, R306, and N355. Residues 392–400 (RKRRIANKK) are C-terminal autoinhibitory region.

As to quaternary structure, interacts with TAMALIN. In terms of tissue distribution, present in all tissues tested, with highest protein levels in brain and adrenal.

It localises to the cytoplasm. Its subcellular location is the cytosol. It is found in the cell membrane. Its function is as follows. Promotes guanine-nucleotide exchange on ARF1. Promotes the activation of ARF factors through replacement of GDP with GTP. This is Cytohesin-3 (Cyth3) from Rattus norvegicus (Rat).